The sequence spans 331 residues: Nucleotide sugar transporter SLC35B4 (331 aa).

11 helical membrane passes run 4–24, 30–50, 59–79, 92–112, 117–137, 153–173, 201–221, 229–249, 251–267, 268–288, and 291–311; these read ALAVGLVFAGCCSNVIFLELL, GCGNIVTFAQFLFIAVEGFLF, PAIPIRYYAIMVTMFFTVSVV, LHMIFRSGSLIANMILGIIIL, SIFKYTSIALVSVGIFICTFM, GFQAFVWWLLGIGALTFALLM, ALPLPGFIFLASDIYDHAVLF, IPGIGVTLPIMWFYLLMNIIT, YVCIRGVFILTTECASL, TVTLVVTLRKFVSLIFSILYF, and PFTLWHWLGTLFVFIGTLMYT. Residues 326–331 carry the Mediates endoplasmic reticulum retention motif; sequence KDNKKN.

The protein belongs to the nucleotide-sugar transporter family. SLC35B subfamily.

It is found in the endoplasmic reticulum membrane. It carries out the reaction UDP-N-acetyl-alpha-D-glucosamine(in) + UDP-alpha-D-glucuronate(out) = UDP-N-acetyl-alpha-D-glucosamine(out) + UDP-alpha-D-glucuronate(in). The enzyme catalyses UDP-alpha-D-xylose(in) + UDP-alpha-D-glucuronate(out) = UDP-alpha-D-xylose(out) + UDP-alpha-D-glucuronate(in). Functionally, antiporter that transports nucleotide sugars across the endoplasmic reticulum (ER) membrane in exchange for another nucleotide sugar. May couple UDP-alpha-D-glucuronate (UDP-GlcA) or UDP-alpha-D-xylose (UDP-Xyl) efflux to UDP-alpha-D-glucuronate (UDP-GlcA) influx into the ER lumen, which in turn stimulates glucuronidation and excretion of endobiotics and xenobiotics. This chain is Nucleotide sugar transporter SLC35B4 (SLC35B4), found in Macaca fascicularis (Crab-eating macaque).